A 69-amino-acid polypeptide reads, in one-letter code: Protease inhibitor carrapatin (69 aa).

Residues 8-58 (CVPTADPGPCKGFMPMWWYNIFTSQCEEFIYGGCQGNDNRYRTKEECDKTC) enclose the BPTI/Kunitz inhibitor domain. 3 disulfides stabilise this stretch: C8–C58, C17–C41, and C33–C54.

The protein resides in the secreted. In terms of biological role, serine protease inhibitor. The polypeptide is Protease inhibitor carrapatin (Rhipicephalus microplus (Cattle tick)).